The primary structure comprises 121 residues: NADH-quinone oxidoreductase subunit A 1 (121 aa).

The next 3 helical transmembrane spans lie at 6–26 (FPIFVVISIAIILAVVLLSIG), 62–82 (LVAMIFIVFDIEVIFMYPWAV), and 90–110 (FYGLIPMVTFVLILLAGYYYI).

Belongs to the complex I subunit 3 family. In terms of assembly, NDH-1 is composed of 14 different subunits. Subunits NuoA, H, J, K, L, M, N constitute the membrane sector of the complex.

Its subcellular location is the cell inner membrane. It carries out the reaction a quinone + NADH + 5 H(+)(in) = a quinol + NAD(+) + 4 H(+)(out). Functionally, NDH-1 shuttles electrons from NADH, via FMN and iron-sulfur (Fe-S) centers, to quinones in the respiratory chain. The immediate electron acceptor for the enzyme in this species is believed to be a menaquinone. Couples the redox reaction to proton translocation (for every two electrons transferred, four hydrogen ions are translocated across the cytoplasmic membrane), and thus conserves the redox energy in a proton gradient. In Chloroherpeton thalassium (strain ATCC 35110 / GB-78), this protein is NADH-quinone oxidoreductase subunit A 1.